Consider the following 315-residue polypeptide: MARIAYLGPEGTFTQAALLEIAAAGLVPGHDDGGAQPLPVDSTPAALDAVRTGAAEFACVPIENSIDGSLAPTLDSLAIGSPLQVFAETTLDVAFSIVVKPGVGAADVRTLAAFPVAAAQVRQWLTAHLPNVELHPAYSNADGARQVAEGQVDAAVTSPLAAAHWALQSLADGVVDESNARTRFLLIGVPGPPPPRTGTDRTSAVLRIANVPGALLDALTEFGMRGIDLTRIESRPTRTGLGTYMFFIDCVGHIADDAVAEALKALHRRCADVRYLGSWPTGQTYAAQPPPADEAAIWLQQLREGKPEASPEPPL.

Positions 3–189 (RIAYLGPEGT…ARTRFLLIGV (187 aa)) constitute a Prephenate dehydratase domain. Residues 203 to 280 (SAVLRIANVP…ADVRYLGSWP (78 aa)) form the ACT domain.

In terms of assembly, homodimer.

It carries out the reaction prephenate + H(+) = 3-phenylpyruvate + CO2 + H2O. It functions in the pathway amino-acid biosynthesis; L-phenylalanine biosynthesis; phenylpyruvate from prephenate: step 1/1. The chain is Prephenate dehydratase (pheA) from Mycobacterium ulcerans (strain Agy99).